The sequence spans 315 residues: Methionyl-tRNA formyltransferase (315 aa).

111 to 114 (SLLP) provides a ligand contact to (6S)-5,6,7,8-tetrahydrofolate.

It belongs to the Fmt family.

The catalysed reaction is L-methionyl-tRNA(fMet) + (6R)-10-formyltetrahydrofolate = N-formyl-L-methionyl-tRNA(fMet) + (6S)-5,6,7,8-tetrahydrofolate + H(+). Attaches a formyl group to the free amino group of methionyl-tRNA(fMet). The formyl group appears to play a dual role in the initiator identity of N-formylmethionyl-tRNA by promoting its recognition by IF2 and preventing the misappropriation of this tRNA by the elongation apparatus. This Chlorobium phaeobacteroides (strain DSM 266 / SMG 266 / 2430) protein is Methionyl-tRNA formyltransferase.